Reading from the N-terminus, the 523-residue chain is Beta-glucosidase 31 (523 aa).

The N-terminal stretch at 1 to 22 (MTPARVVFICCVVLLAAAAAAA) is a signal peptide. Residues glutamine 49, histidine 149, and 194–195 (NE) each bind a beta-D-glucoside. Catalysis depends on glutamate 195, which acts as the Proton donor. Cysteine 214 and cysteine 223 are oxidised to a cystine. Residue asparagine 227 is glycosylated (N-linked (GlcNAc...) asparagine). A beta-D-glucoside contacts are provided by tyrosine 339 and glutamate 413. Glutamate 413 functions as the Nucleophile in the catalytic mechanism. The N-linked (GlcNAc...) asparagine glycan is linked to asparagine 450. Residues tryptophan 460, 467–468 (EY), and phenylalanine 476 each bind a beta-D-glucoside.

It belongs to the glycosyl hydrolase 1 family.

It catalyses the reaction Hydrolysis of terminal, non-reducing beta-D-glucosyl residues with release of beta-D-glucose.. The chain is Beta-glucosidase 31 (BGLU31) from Oryza sativa subsp. japonica (Rice).